The sequence spans 434 residues: Trigger factor (434 aa).

The 86-residue stretch at 160-245 folds into the PPIase FKBP-type domain; it reads GDKVKMNFVG…LTEVLAANLP (86 aa).

Belongs to the FKBP-type PPIase family. Tig subfamily.

The protein resides in the cytoplasm. The catalysed reaction is [protein]-peptidylproline (omega=180) = [protein]-peptidylproline (omega=0). In terms of biological role, involved in protein export. Acts as a chaperone by maintaining the newly synthesized protein in an open conformation. Functions as a peptidyl-prolyl cis-trans isomerase. The sequence is that of Trigger factor from Shewanella sp. (strain MR-4).